A 58-amino-acid polypeptide reads, in one-letter code: Mitochondrial import receptor subunit TOM7 homolog (58 aa).

Residues 1–16 (MKLSPATKSFIGKTVD) lie on the Cytoplasmic side of the membrane. Residues 17 to 35 (ISTFAIQWGFVPFVVYLGF) form a helical membrane-spanning segment. The Mitochondrial intermembrane segment spans residues 36 to 58 (KKGAEPMPNGQILPLSAMSLLWG).

It belongs to the Tom7 family. Forms part of the preprotein translocase complex of the outer mitochondrial membrane (TOM complex).

The protein localises to the mitochondrion outer membrane. In Caenorhabditis elegans, this protein is Mitochondrial import receptor subunit TOM7 homolog (tomm-7).